The following is a 996-amino-acid chain: Protein psiR (996 aa).

Positions 1-21 (MKKIILMLLLFSIFFILKSES) are cleaved as a signal peptide. N79, N117, N323, N396, N428, N474, N500, N645, and N779 each carry an N-linked (GlcNAc...) asparagine glycan. The PA14 domain maps to 105 to 250 (QSLSNPNIYS…YDECGVCEGD (146 aa)).

It belongs to the prespore-cell-inducing factor family.

It localises to the secreted. This Dictyostelium discoideum (Social amoeba) protein is Protein psiR (psiR).